Here is a 213-residue protein sequence, read N- to C-terminus: uncharacterized protein (213 aa).

This is an uncharacterized protein from Magallana gigas (Pacific oyster).